The following is a 256-amino-acid chain: Ubiquinone/menaquinone biosynthesis C-methyltransferase UbiE (256 aa).

S-adenosyl-L-methionine contacts are provided by residues T79, D100, and 128-129 (DA).

This sequence belongs to the class I-like SAM-binding methyltransferase superfamily. MenG/UbiE family.

It catalyses the reaction a 2-demethylmenaquinol + S-adenosyl-L-methionine = a menaquinol + S-adenosyl-L-homocysteine + H(+). The catalysed reaction is a 2-methoxy-6-(all-trans-polyprenyl)benzene-1,4-diol + S-adenosyl-L-methionine = a 5-methoxy-2-methyl-3-(all-trans-polyprenyl)benzene-1,4-diol + S-adenosyl-L-homocysteine + H(+). Its pathway is quinol/quinone metabolism; menaquinone biosynthesis; menaquinol from 1,4-dihydroxy-2-naphthoate: step 2/2. It participates in cofactor biosynthesis; ubiquinone biosynthesis. Its function is as follows. Methyltransferase required for the conversion of demethylmenaquinol (DMKH2) to menaquinol (MKH2) and the conversion of 2-polyprenyl-6-methoxy-1,4-benzoquinol (DDMQH2) to 2-polyprenyl-3-methyl-6-methoxy-1,4-benzoquinol (DMQH2). The polypeptide is Ubiquinone/menaquinone biosynthesis C-methyltransferase UbiE (Pseudomonas fluorescens (strain Pf0-1)).